Here is a 179-residue protein sequence, read N- to C-terminus: MQAFYLDSEVWSSFDFTRQPSSVILSAEVLAYLDDVDETKRKYFSSTHTWMPIISKMRLNRLTDSAVGKTRVDIALLLLCMKLVPDGVAEDENKPSDLYLTAKQLCATLERNCLLTLRSLQANLLLAVYEVGHAIYPAAALTVGCCVRQGVALGLHNKDAPQLGGNVRSWVDWEERQRG.

Its subcellular location is the nucleus. In terms of biological role, transcription factor that probably coregulates the gene clusters that mediates the biosynthesis of botcinin acid and its botcinin derivatives, acetate-derived polyketides that contribute to virulence when combined with the sesquiterpene botrydial. Botcinin acid and its derivatives have been shown to induce chlorosis and necrosis during host plant infection, but also have antifungal activities. This chain is Transcription factor BOA15, found in Botryotinia fuckeliana (strain B05.10) (Noble rot fungus).